Here is a 627-residue protein sequence, read N- to C-terminus: 1-deoxy-D-xylulose-5-phosphate synthase (627 aa).

Residues histidine 80 and glycine 121–serine 123 each bind thiamine diphosphate. Position 152 (aspartate 152) interacts with Mg(2+). Residues glycine 153–alanine 154, asparagine 181, tyrosine 288, and glutamate 370 each bind thiamine diphosphate. Asparagine 181 provides a ligand contact to Mg(2+).

This sequence belongs to the transketolase family. DXPS subfamily. As to quaternary structure, homodimer. It depends on Mg(2+) as a cofactor. The cofactor is thiamine diphosphate.

The enzyme catalyses D-glyceraldehyde 3-phosphate + pyruvate + H(+) = 1-deoxy-D-xylulose 5-phosphate + CO2. It participates in metabolic intermediate biosynthesis; 1-deoxy-D-xylulose 5-phosphate biosynthesis; 1-deoxy-D-xylulose 5-phosphate from D-glyceraldehyde 3-phosphate and pyruvate: step 1/1. In terms of biological role, catalyzes the acyloin condensation reaction between C atoms 2 and 3 of pyruvate and glyceraldehyde 3-phosphate to yield 1-deoxy-D-xylulose-5-phosphate (DXP). The polypeptide is 1-deoxy-D-xylulose-5-phosphate synthase (Aliivibrio fischeri (strain ATCC 700601 / ES114) (Vibrio fischeri)).